The following is a 336-amino-acid chain: CENP-A histone chaperone scm3 (336 aa).

Residues 243-269 (RRRNPLLSSPKTPLRRSFSKSKVRNSN) form a disordered region. Basic residues predominate over residues 255-269 (PLRRSFSKSKVRNSN).

Its subcellular location is the cytoplasm. The protein resides in the nucleus. Functionally, centromeric protein that plays a central role in the incorporation and maintenance of histone H3-like variant CENPA at centromeres. The protein is CENP-A histone chaperone scm3 of Schizosaccharomyces pombe (strain 972 / ATCC 24843) (Fission yeast).